A 622-amino-acid polypeptide reads, in one-letter code: Chaperone protein HscA homolog (622 aa).

The protein belongs to the heat shock protein 70 family.

In terms of biological role, chaperone involved in the maturation of iron-sulfur cluster-containing proteins. Has a low intrinsic ATPase activity which is markedly stimulated by HscB. The sequence is that of Chaperone protein HscA homolog from Burkholderia multivorans (strain ATCC 17616 / 249).